We begin with the raw amino-acid sequence, 503 residues long: Probable cytosol aminopeptidase (503 aa).

2 residues coordinate Mn(2+): lysine 274 and aspartate 279. Residue lysine 286 is part of the active site. Mn(2+) is bound by residues aspartate 297, aspartate 356, and glutamate 358. The active site involves arginine 360.

The protein belongs to the peptidase M17 family. The cofactor is Mn(2+).

The protein resides in the cytoplasm. The enzyme catalyses Release of an N-terminal amino acid, Xaa-|-Yaa-, in which Xaa is preferably Leu, but may be other amino acids including Pro although not Arg or Lys, and Yaa may be Pro. Amino acid amides and methyl esters are also readily hydrolyzed, but rates on arylamides are exceedingly low.. The catalysed reaction is Release of an N-terminal amino acid, preferentially leucine, but not glutamic or aspartic acids.. Its function is as follows. Presumably involved in the processing and regular turnover of intracellular proteins. Catalyzes the removal of unsubstituted N-terminal amino acids from various peptides. The protein is Probable cytosol aminopeptidase of Burkholderia ambifaria (strain ATCC BAA-244 / DSM 16087 / CCUG 44356 / LMG 19182 / AMMD) (Burkholderia cepacia (strain AMMD)).